Here is a 1228-residue protein sequence, read N- to C-terminus: MSKELDTVEVSIRVPFGKSKRLSTTASRRARVQSIMYFLAFNAASKYYTNYELLHNGVEVDEQQLISELAGNEQTVHLQLRLKPYNTGEVIRHFVTFREYIGFVGDSDDDITSLALSNVAKFRELPLTDIAAASGKTEVADDRQKEEFQVSDAEKAVFTKELDSILELRPSAQDVLKGGSALSKPCLRSLIISGYNPVPAFFRTKGHLLYLQAVTLEGETLHITATVSGFYVNKSSAIKFDPTLKTDAAVCLTLYELLTKHSKKFASHLSQLEAALKAHESVNYVKPISVFLHKTWFPSSLPSNSIDFTEYQLEALNFQTERNFNDEFQAVKETSSEDIVARLEKEKLLNRVIHDFNVAASKGSMEIFYGNMVAMNPDAPRQEHIFLKNNIFYSFVSDLDGHYQDKGGDAAAHAASNQDLHIIKTLLQSNMRSVRHLLTAVVEFGGVRILAQSPVPGILDTAGMKFIKNEKGEEEAIQAKNDITVCYGFDEASNKVIADAEFGSSLDDFAKVFHLKKHEVDGVELKVASTSKGVVGFDKRNYILDLADNNPLDVGFALENFDAVTDEKARYPHRQTLLRRELVEKWWFSKVDGTGSEMEAAYEEGKFSYNPDAYKIEGIEDETVVELSDYLRKEVVPTLVKEVAEGSITAPFNGEHLVDIMHKNGINIRYLGRVIELAEQELEAQRALREAHLQQVEADNKEFTEWEANYLKHIESLIKERQVTIQKLLAEGKEVPAELKEELKLDDKEIRKPHEKEGVAVNNDQLSVLLTLAQIEIISRSIKHVFRKHCHELPAVIIPTFIAFALNLLFGYCYNKAPIAEFPTDGSDIDFAFTKLTREQLLSEISEQAVLRFRYTLPDGWESRYEHTPFALLRPICNKFGIQLLNKEYFFTREQYQNWRQAQDKKIRSKLVEPVSTFSINDLSVRPIIKVATLTTGVSDDCWAQGAYMINEEEKQATALALFSQSIAFREETSGYVHPTVAESYLALSTIHSKLEKKSEAVALCRKACAIYERVCGFDSFEMIRSLNNLAMLEMANDSPYNAALCLKTIMSILSVVIPVNHPATINSYSMLHSMCSSLQNSSAMIKVLNKLGDIIVEIDGHKSLPYAVNESRLANLYASVGEYKRSLACIESCYELFSKELGVNHKTTVECNSWITGVENLIESTSQSKALAASKAAAAAKQGEKKPAQKQQQSAELRDKSIDELMNFINGGSAPAKKSKKKKNAKK.

In terms of domain architecture, Clu spans 298-557 (PSSLPSNSID…DNNPLDVGFA (260 aa)). The stretch at 486–519 (CYGFDEASNKVIADAEFGSSLDDFAKVFHLKKHE) is one TPR 1 repeat. Positions 671–702 (LGRVIELAEQELEAQRALREAHLQQVEADNKE) form a coiled coil. 2 TPR repeats span residues 982–1015 (AESYLALSTIHSKLEKKSEAVALCRKACAIYERV) and 1108–1141 (AVNESRLANLYASVGEYKRSLACIESCYELFSKE).

The protein belongs to the CLU family. May associate with the eukaryotic translation initiation factor 3 (eIF-3) complex.

Its subcellular location is the cytoplasm. Functionally, mRNA-binding protein involved in proper cytoplasmic distribution of mitochondria. The chain is Clustered mitochondria protein homolog from Eremothecium gossypii (strain ATCC 10895 / CBS 109.51 / FGSC 9923 / NRRL Y-1056) (Yeast).